The following is a 262-amino-acid chain: Triosephosphate isomerase (262 aa).

13–15 is a binding site for substrate; sequence NWK. The Electrophile role is filled by histidine 103. The active-site Proton acceptor is the glutamate 175. Substrate-binding positions include glycine 181, serine 221, and 242–243; that span reads GG.

The protein belongs to the triosephosphate isomerase family. Homodimer.

Its subcellular location is the cytoplasm. It carries out the reaction D-glyceraldehyde 3-phosphate = dihydroxyacetone phosphate. It participates in carbohydrate biosynthesis; gluconeogenesis. The protein operates within carbohydrate degradation; glycolysis; D-glyceraldehyde 3-phosphate from glycerone phosphate: step 1/1. Its function is as follows. Involved in the gluconeogenesis. Catalyzes stereospecifically the conversion of dihydroxyacetone phosphate (DHAP) to D-glyceraldehyde-3-phosphate (G3P). The protein is Triosephosphate isomerase of Corynebacterium efficiens (strain DSM 44549 / YS-314 / AJ 12310 / JCM 11189 / NBRC 100395).